The primary structure comprises 443 residues: Aspartate--tRNA(Asp/Asn) ligase (443 aa).

Glu175 is a binding site for L-aspartate. The aspartate stretch occupies residues 197–200 (QLFK). Residue Arg219 coordinates L-aspartate. ATP-binding positions include 219-221 (RAE), 227-229 (RHL), and Glu366. The Mg(2+) site is built by Glu366 and Ser369. Residues Ser369 and Arg373 each contribute to the L-aspartate site. 414 to 417 (GCER) lines the ATP pocket.

It belongs to the class-II aminoacyl-tRNA synthetase family. Type 2 subfamily. In terms of assembly, homodimer. The cofactor is Mg(2+).

It is found in the cytoplasm. The catalysed reaction is tRNA(Asx) + L-aspartate + ATP = L-aspartyl-tRNA(Asx) + AMP + diphosphate. Aspartyl-tRNA synthetase with relaxed tRNA specificity since it is able to aspartylate not only its cognate tRNA(Asp) but also tRNA(Asn). Reaction proceeds in two steps: L-aspartate is first activated by ATP to form Asp-AMP and then transferred to the acceptor end of tRNA(Asp/Asn). This chain is Aspartate--tRNA(Asp/Asn) ligase, found in Methanococcoides burtonii (strain DSM 6242 / NBRC 107633 / OCM 468 / ACE-M).